Here is a 443-residue protein sequence, read N- to C-terminus: Ribulose bisphosphate carboxylase large chain (443 aa).

The residue at position 3 (Lys3) is an N6,N6,N6-trimethyllysine. 2 residues coordinate substrate: Asn112 and Thr162. The active-site Proton acceptor is the Lys164. Lys166 contacts substrate. 3 residues coordinate Mg(2+): Lys190, Asp192, and Glu193. An N6-carboxylysine modification is found at Lys190. The Proton acceptor role is filled by His283. Positions 284, 316, and 368 each coordinate substrate.

The protein belongs to the RuBisCO large chain family. Type I subfamily. Heterohexadecamer of 8 large chains and 8 small chains; disulfide-linked. The disulfide link is formed within the large subunit homodimers. It depends on Mg(2+) as a cofactor. Post-translationally, the disulfide bond which can form in the large chain dimeric partners within the hexadecamer appears to be associated with oxidative stress and protein turnover.

It is found in the plastid. The protein localises to the chloroplast. The catalysed reaction is 2 (2R)-3-phosphoglycerate + 2 H(+) = D-ribulose 1,5-bisphosphate + CO2 + H2O. It carries out the reaction D-ribulose 1,5-bisphosphate + O2 = 2-phosphoglycolate + (2R)-3-phosphoglycerate + 2 H(+). Functionally, ruBisCO catalyzes two reactions: the carboxylation of D-ribulose 1,5-bisphosphate, the primary event in carbon dioxide fixation, as well as the oxidative fragmentation of the pentose substrate in the photorespiration process. Both reactions occur simultaneously and in competition at the same active site. This chain is Ribulose bisphosphate carboxylase large chain, found in Iris germanica (Bearded iris).